We begin with the raw amino-acid sequence, 55 residues long: Neurotoxin BmP08 (55 aa).

An N-terminal signal peptide occupies residues 1–23 (MKIFFAVLVILVLFSMLIWTAYG). Cystine bridges form between C30–C45, C36–C50, and C39–C53.

Expressed by the venom gland.

Its subcellular location is the secreted. The protein is Neurotoxin BmP08 of Olivierus martensii (Manchurian scorpion).